The following is a 280-amino-acid chain: Large ribosomal subunit protein uL2 (280 aa).

Disordered regions lie at residues 27 to 59 (STPEKSLVRPLHGRGGRNAHGRITTRHKGGGHK) and 225 to 280 (VMNP…KHSR). Basic residues-rich tracts occupy residues 37-59 (LHGRGGRNAHGRITTRHKGGGHK) and 268-280 (IVRRRRTGKKHSR).

The protein belongs to the universal ribosomal protein uL2 family. As to quaternary structure, part of the 50S ribosomal subunit. Forms a bridge to the 30S subunit in the 70S ribosome.

One of the primary rRNA binding proteins. Required for association of the 30S and 50S subunits to form the 70S ribosome, for tRNA binding and peptide bond formation. It has been suggested to have peptidyltransferase activity; this is somewhat controversial. Makes several contacts with the 16S rRNA in the 70S ribosome. This chain is Large ribosomal subunit protein uL2, found in Mycobacterium bovis (strain ATCC BAA-935 / AF2122/97).